A 481-amino-acid chain; its full sequence is Transmembrane protein 39A (481 aa).

8 helical membrane passes run 74 to 94 (LFET…YINI), 109 to 129 (STSL…AVML), 150 to 170 (LCYV…GWVL), 182 to 202 (SVLK…LCCL), 278 to 298 (EVLF…LCFV), 313 to 333 (LIMV…PPHY), 411 to 431 (LLNV…YSLL), and 437 to 457 (NHTL…FKLL).

This sequence belongs to the TMEM39 family.

The protein localises to the endoplasmic reticulum membrane. Its function is as follows. Regulates autophagy by controlling the spatial distribution and levels of the intracellular phosphatidylinositol 4-phosphate (PtdIns(4)P) pools. Modulates (PtdIns(4)P) levels by regulating the ER-to-Golgi trafficking of the phosphatidylinositide phosphatase SACM1L. In Danio rerio (Zebrafish), this protein is Transmembrane protein 39A (tmem39a).